We begin with the raw amino-acid sequence, 487 residues long: Glutamyl-tRNA(Gln) amidotransferase subunit A (487 aa).

Residues K74 and S149 each act as charge relay system in the active site. The active-site Acyl-ester intermediate is S173.

Belongs to the amidase family. GatA subfamily. As to quaternary structure, heterotrimer of A, B and C subunits.

It catalyses the reaction L-glutamyl-tRNA(Gln) + L-glutamine + ATP + H2O = L-glutaminyl-tRNA(Gln) + L-glutamate + ADP + phosphate + H(+). Functionally, allows the formation of correctly charged Gln-tRNA(Gln) through the transamidation of misacylated Glu-tRNA(Gln) in organisms which lack glutaminyl-tRNA synthetase. The reaction takes place in the presence of glutamine and ATP through an activated gamma-phospho-Glu-tRNA(Gln). This Synechococcus sp. (strain WH7803) protein is Glutamyl-tRNA(Gln) amidotransferase subunit A.